Here is a 500-residue protein sequence, read N- to C-terminus: 5-taurinomethyluridine-[tRNA] synthase subunit GTPB3, mitochondrial (500 aa).

A mitochondrion-targeting transit peptide spans 1-73; that stretch reads MHFISCCLRR…RRLTRSLPAP (73 aa). 5,10-methylenetetrahydrofolate contacts are provided by Arg-53, Glu-111, and Lys-151. Positions 248 to 422 constitute a TrmE-type G domain; it reads GVHVVIAGST…LLTLLHNTLK (175 aa). GTP is bound by residues 255 to 262, 281 to 285, 302 to 305, and 373 to 376; these read GSTNAGKS, GTTRD, DTAG, and NESD. Asn-258 contributes to the K(+) binding site. The Mg(2+) site is built by Ser-262 and Thr-283. Lys-500 serves as a coordination point for 5,10-methylenetetrahydrofolate.

The protein belongs to the TRAFAC class TrmE-Era-EngA-EngB-Septin-like GTPase superfamily. TrmE GTPase family. It depends on K(+) as a cofactor.

It localises to the mitochondrion. The catalysed reaction is GTP + H2O = GDP + phosphate + H(+). Its function is as follows. GTPase component of the GTPBP3-MTO1 complex that catalyzes the 5-taurinomethyluridine (taum(5)U) modification at the 34th wobble position (U34) of mitochondrial tRNAs (mt-tRNAs), which plays a role in mt-tRNA decoding and mitochondrial translation. Taum(5)U formation on mammalian mt-tRNA requires the presence of both GTPBP3-mediated GTPase activity and MTO1 catalytic activity. This Danio rerio (Zebrafish) protein is 5-taurinomethyluridine-[tRNA] synthase subunit GTPB3, mitochondrial (gtpbp3).